A 282-amino-acid chain; its full sequence is Pantothenate synthetase (282 aa).

30–37 serves as a coordination point for ATP; the sequence is MGYLHEGH. The active-site Proton donor is the histidine 37. Residue glutamine 61 participates in (R)-pantoate binding. Glutamine 61 is a binding site for beta-alanine. 148–151 contacts ATP; the sequence is GQKD. Residue glutamine 154 participates in (R)-pantoate binding. ATP-binding positions include valine 177 and 185-188; that span reads MSSR.

It belongs to the pantothenate synthetase family. Homodimer.

The protein localises to the cytoplasm. The catalysed reaction is (R)-pantoate + beta-alanine + ATP = (R)-pantothenate + AMP + diphosphate + H(+). The protein operates within cofactor biosynthesis; (R)-pantothenate biosynthesis; (R)-pantothenate from (R)-pantoate and beta-alanine: step 1/1. In terms of biological role, catalyzes the condensation of pantoate with beta-alanine in an ATP-dependent reaction via a pantoyl-adenylate intermediate. This is Pantothenate synthetase from Syntrophomonas wolfei subsp. wolfei (strain DSM 2245B / Goettingen).